A 340-amino-acid polypeptide reads, in one-letter code: GTPase Obg (340 aa).

An Obg domain is found at 1–159; sequence MKFLDQAKVY…RTLWLRLKLI (159 aa). The OBG-type G domain maps to 160-327; sequence ADAGIIGLPN…LLRAGAHIIE (168 aa). Residues 166–173, 191–195, 212–215, 279–282, and 308–310 each bind GTP; these read GLPNAGKS, FTTLY, DIPG, SQID, and SAV. Mg(2+) contacts are provided by serine 173 and threonine 193.

This sequence belongs to the TRAFAC class OBG-HflX-like GTPase superfamily. OBG GTPase family. In terms of assembly, monomer. It depends on Mg(2+) as a cofactor.

It localises to the cytoplasm. Functionally, an essential GTPase which binds GTP, GDP and possibly (p)ppGpp with moderate affinity, with high nucleotide exchange rates and a fairly low GTP hydrolysis rate. Plays a role in control of the cell cycle, stress response, ribosome biogenesis and in those bacteria that undergo differentiation, in morphogenesis control. This chain is GTPase Obg, found in Bartonella henselae (strain ATCC 49882 / DSM 28221 / CCUG 30454 / Houston 1) (Rochalimaea henselae).